Reading from the N-terminus, the 312-residue chain is Aspartate carbamoyltransferase catalytic subunit (312 aa).

Carbamoyl phosphate-binding residues include arginine 58 and threonine 59. Lysine 86 is an L-aspartate binding site. Residues arginine 108, histidine 136, and glutamine 139 each contribute to the carbamoyl phosphate site. Residues arginine 169 and arginine 223 each coordinate L-aspartate. The carbamoyl phosphate site is built by glycine 264 and proline 265.

The protein belongs to the aspartate/ornithine carbamoyltransferase superfamily. ATCase family. Heterododecamer (2C3:3R2) of six catalytic PyrB chains organized as two trimers (C3), and six regulatory PyrI chains organized as three dimers (R2).

It catalyses the reaction carbamoyl phosphate + L-aspartate = N-carbamoyl-L-aspartate + phosphate + H(+). The protein operates within pyrimidine metabolism; UMP biosynthesis via de novo pathway; (S)-dihydroorotate from bicarbonate: step 2/3. Functionally, catalyzes the condensation of carbamoyl phosphate and aspartate to form carbamoyl aspartate and inorganic phosphate, the committed step in the de novo pyrimidine nucleotide biosynthesis pathway. The chain is Aspartate carbamoyltransferase catalytic subunit from Desulfitobacterium hafniense (strain DSM 10664 / DCB-2).